The following is a 203-amino-acid chain: CASP-like protein 2U2 (203 aa).

The interval 1–21 (MGGFVDDGAAGLAPSHGSSRA) is disordered. Residues 1–27 (MGGFVDDGAAGLAPSHGSSRAGRGLEG) are Cytoplasmic-facing. Residues 28-48 (AGVFLRFVASLLSIAGLMLLV) traverse the membrane as a helical segment. At 49–73 (KDNQTVQQMVATEAVTLETKYSDIS) the chain is on the extracellular side. An N-linked (GlcNAc...) asparagine glycan is attached at asparagine 51. A helical transmembrane segment spans residues 74–94 (AFVFLLYTNGLVAVYCFFLAL). The Cytoplasmic portion of the chain corresponds to 95–108 (ASVFSLIASARSGK). A helical transmembrane segment spans residues 109–129 (LAGWVTFVLDQGLAYVLLAAA). Residues 130-163 (AASTEVLYLAENGDLKTSWAEICSQFGHFCHMAR) are Extracellular-facing. Residues 164-184 (ASIVVSFLSMLAMAVLSVMSA) form a helical membrane-spanning segment. Over 185 to 203 (QQLFSKYRRPMTAKTAQDI) the chain is Cytoplasmic.

It belongs to the Casparian strip membrane proteins (CASP) family. As to quaternary structure, homodimer and heterodimers.

It localises to the cell membrane. The sequence is that of CASP-like protein 2U2 from Osmunda lancea (Fern).